Consider the following 235-residue polypeptide: Probable transcriptional regulatory protein Cla_1081 (235 aa).

This sequence belongs to the TACO1 family.

It localises to the cytoplasm. The chain is Probable transcriptional regulatory protein Cla_1081 from Campylobacter lari (strain RM2100 / D67 / ATCC BAA-1060).